The sequence spans 733 residues: Envelope glycoprotein H (733 aa).

An N-terminal signal peptide occupies residues 1–14 (MLFLILLCVTGAQA). Residues 15 to 707 (ITTPAPPRPA…LYANRAMNII (693 aa)) lie on the Virion surface side of the membrane. Residues N78 and N119 are each glycosylated (N-linked (GlcNAc...) asparagine; by host). The interaction with gL stretch occupies residues 185 to 249 (GAYQLAGMAT…NSDAEELLLL (65 aa)). N-linked (GlcNAc...) asparagine; by host glycosylation is found at N266, N431, N561, N573, N612, N627, and N689. A helical transmembrane segment spans residues 708–728 (IILLFTIAALAGVFIVYKIVM). Residues 729 to 733 (YMTFK) are Intravirion-facing.

The protein belongs to the herpesviridae glycoprotein H family. As to quaternary structure, interacts with glycoprotein L (gL); this interaction is necessary for the correct processing and cell surface expression of gH. The heterodimer gH/gL seems to interact with gB trimers during fusion. Post-translationally, N-glycosylated, O-glycosylated, and sialylated.

It is found in the virion membrane. The protein localises to the host cell membrane. Its subcellular location is the host endosome membrane. Functionally, the heterodimer glycoprotein H-glycoprotein L is required for the fusion of viral and plasma membranes leading to virus entry into the host cell. Following initial binding to host receptor, membrane fusion is mediated by the fusion machinery composed of gB and the heterodimer gH/gL. May also be involved in the fusion between the virion envelope and the outer nuclear membrane during virion morphogenesis. The chain is Envelope glycoprotein H from Alcelaphine herpesvirus 1 (strain C500) (AlHV-1).